A 124-amino-acid polypeptide reads, in one-letter code: Large ribosomal subunit protein uL22 (124 aa).

It belongs to the universal ribosomal protein uL22 family. As to quaternary structure, part of the 50S ribosomal subunit.

In terms of biological role, this protein binds specifically to 23S rRNA; its binding is stimulated by other ribosomal proteins, e.g. L4, L17, and L20. It is important during the early stages of 50S assembly. It makes multiple contacts with different domains of the 23S rRNA in the assembled 50S subunit and ribosome. The globular domain of the protein is located near the polypeptide exit tunnel on the outside of the subunit, while an extended beta-hairpin is found that lines the wall of the exit tunnel in the center of the 70S ribosome. The sequence is that of Large ribosomal subunit protein uL22 from Synechococcus sp. (strain JA-2-3B'a(2-13)) (Cyanobacteria bacterium Yellowstone B-Prime).